The sequence spans 869 residues: MSNIKNNNDLSKKYDHKICEQQFSLWTTQKELNKKNLKANKNSYSILLPPPNVTGNLHLGHALNGTIQDCLIRFNNLKGLSAYWICGMDHAGIATQTKYEKYLRENKISNKDKSRDEKVADLFEWSQNVGNNIRNQWKNMGFFLDYENEHFTLEKKSNEMVNQVFVKMYNDGLIYRSKTLVNWDIKLQSAISNIEVIKKEVETNLYYIRYYLSNSKDYLLVATTRPETIFVDECLVVNPKDKRYKNYINKFAINPLTNKEIKIIADEYVDIQFGTGVMKCTPAHDFNDYELGKKYKLNIISCFNEDGTTNNYAVGFENLKIADARVKCVEYLEKNNLLEKVEKTISNVGFSERTNAVVEPMMSEQWFVKVSEYSKKVIELQKSSKKIQFFPIKFEKNLINWMTNLNDWCISRQLWWGHQIPVWYKKDSKEIYVGTKPPKNEELYVRDNDVLDTWFSSGLWPITTTDALKSKDALFPTNVLVTGFDIIFFWVFRMMFFSLYLKKEVPFKHCYITGLIRDEHNNKMSKSLGNGVDPNDVIEKYGADALRLFLLSSSSPGEDLCYVEEKVKSCWGFINKLWNSFRYVEMNSSDFNFDEDKTPKNLEDFDKWILNKFNKAYSEFLQQFNKYNFLVSIKKILDFTWDDFCNTYIELSKNRTSNQESKLWVLNYLIKKILILFHPMCPFVTSNLYDNFKFKTKDSILLERLDFKKISNLKESSIEDVLQIINKIRIFNFENKIPNNKVIDIHLEVLNPKLFKISDEVINILNTAKINIVKQDIKSLKPDYVENNYLIFILNKEDLLGSNNEANNIEKIKKEIEFVKSEISRCNGMLSNKSFIEKAPKEKIELEKSKKEKHEMKLKELEKLLSSHK.

The 'HIGH' region motif lies at Pro51–His61. The 'KMSKS' region signature appears at Lys523–Ser527. Position 526 (Lys526) interacts with ATP. A coiled-coil region spans residues Glu797–Lys869.

The protein belongs to the class-I aminoacyl-tRNA synthetase family. ValS type 1 subfamily. Monomer.

It is found in the cytoplasm. The enzyme catalyses tRNA(Val) + L-valine + ATP = L-valyl-tRNA(Val) + AMP + diphosphate. Catalyzes the attachment of valine to tRNA(Val). As ValRS can inadvertently accommodate and process structurally similar amino acids such as threonine, to avoid such errors, it has a 'posttransfer' editing activity that hydrolyzes mischarged Thr-tRNA(Val) in a tRNA-dependent manner. The sequence is that of Valine--tRNA ligase from Malacoplasma penetrans (strain HF-2) (Mycoplasma penetrans).